Here is an 84-residue protein sequence, read N- to C-terminus: Large ribosomal subunit protein bL27 (84 aa).

Positions 1 to 24 (MAHKKGAASTKNGRDSNSQRLGVK) are disordered. Over residues 9-20 (STKNGRDSNSQR) the composition is skewed to polar residues.

The protein belongs to the bacterial ribosomal protein bL27 family.

This Nocardioides sp. (strain ATCC BAA-499 / JS614) protein is Large ribosomal subunit protein bL27.